Here is a 319-residue protein sequence, read N- to C-terminus: Pantothenate kinase (319 aa).

ATP is bound at residue 96–103; sequence GSVAVGKS.

It belongs to the prokaryotic pantothenate kinase family.

The protein localises to the cytoplasm. The enzyme catalyses (R)-pantothenate + ATP = (R)-4'-phosphopantothenate + ADP + H(+). Its pathway is cofactor biosynthesis; coenzyme A biosynthesis; CoA from (R)-pantothenate: step 1/5. This Bacillus subtilis (strain 168) protein is Pantothenate kinase (coaA).